A 736-amino-acid polypeptide reads, in one-letter code: Catalase-peroxidase (736 aa).

Residues 1–10 (MDAKTDDKGA) are compositionally biased toward basic and acidic residues. Residues 1 to 26 (MDAKTDDKGAGKCPFSGGSHGHRNRD) are disordered. Positions 96 to 218 (WHSAGTYRIT…LGAVQMGLIY (123 aa)) form a cross-link, tryptophyl-tyrosyl-methioninium (Trp-Tyr) (with M-244). Catalysis depends on histidine 97, which acts as the Proton acceptor. A cross-link (tryptophyl-tyrosyl-methioninium (Tyr-Met) (with W-96)) is located at residues 218-244 (YVNPEGPNGNPDPVAAAKDIRETFARM). Heme b is bound at residue histidine 259.

This sequence belongs to the peroxidase family. Peroxidase/catalase subfamily. Homodimer or homotetramer. The cofactor is heme b. Post-translationally, formation of the three residue Trp-Tyr-Met cross-link is important for the catalase, but not the peroxidase activity of the enzyme.

The catalysed reaction is H2O2 + AH2 = A + 2 H2O. It carries out the reaction 2 H2O2 = O2 + 2 H2O. Its function is as follows. Bifunctional enzyme with both catalase and broad-spectrum peroxidase activity. The sequence is that of Catalase-peroxidase from Rhodopseudomonas palustris (strain ATCC BAA-98 / CGA009).